The following is a 2218-amino-acid chain: RNA-directed RNA polymerase L (2218 aa).

The segment at 26 to 288 is endonuclease; it reads KLAFLVQTEP…VAEDNIEHLI (263 aa). Residues E51, D89, and E102 each coordinate Mn(2+). The active site involves K115. Residues 1174–1370 enclose the RdRp catalytic domain; it reads LSMKLNVSLA…YMSDQLNKFV (197 aa). A Mg(2+)-binding site is contributed by D1332.

The protein belongs to the Bunyavirales RNA polymerase family. In terms of assembly, homomultimer; the oligomeric structure is essential for the polymerase activity. Interacts with nucleoprotein N. Interacts with protein Z; this interaction inhibits viral transcription and replication, Z partially blocks the product exit tunnel for the releasing nascent RNA product. Mn(2+) is required as a cofactor. The cofactor is Mg(2+).

Its subcellular location is the virion. It is found in the host cytoplasm. It catalyses the reaction RNA(n) + a ribonucleoside 5'-triphosphate = RNA(n+1) + diphosphate. Functionally, RNA-dependent RNA polymerase, which is responsible for the replication and transcription of the viral RNA genome using antigenomic RNA as an intermediate. During transcription, synthesizes subgenomic RNAs and assures their capping by a cap-snatching mechanism, which involves the endonuclease activity cleaving the host capped pre-mRNAs. These short capped RNAs are then used as primers for viral transcription. The 3'-end of subgenomic mRNAs molecules are heterogeneous and not polyadenylated. The replicase function is to direct synthesis of antigenomic and genomic RNA which are encapsidated and non capped. As a consequence of the use of the same enzyme for both transcription and replication, these mechanisms need to be well coordinated. These processes may be regulated by proteins N and Z in a dose-dependent manner. Z protein inhibits the viral polymerase L und thus the viral transcription and RNA synthesis. This is RNA-directed RNA polymerase L from Lassa virus (strain Mouse/Sierra Leone/Josiah/1976) (LASV).